We begin with the raw amino-acid sequence, 79 residues long: ATP synthase subunit c (79 aa).

The next 2 membrane-spanning stretches (helical) occupy residues 10–30 (IAGA…IGVL) and 52–72 (FFIV…LAMY).

Belongs to the ATPase C chain family. In terms of assembly, F-type ATPases have 2 components, F(1) - the catalytic core - and F(0) - the membrane proton channel. F(1) has five subunits: alpha(3), beta(3), gamma(1), delta(1), epsilon(1). F(0) has three main subunits: a(1), b(2) and c(10-14). The alpha and beta chains form an alternating ring which encloses part of the gamma chain. F(1) is attached to F(0) by a central stalk formed by the gamma and epsilon chains, while a peripheral stalk is formed by the delta and b chains.

The protein resides in the cell inner membrane. F(1)F(0) ATP synthase produces ATP from ADP in the presence of a proton or sodium gradient. F-type ATPases consist of two structural domains, F(1) containing the extramembraneous catalytic core and F(0) containing the membrane proton channel, linked together by a central stalk and a peripheral stalk. During catalysis, ATP synthesis in the catalytic domain of F(1) is coupled via a rotary mechanism of the central stalk subunits to proton translocation. Functionally, key component of the F(0) channel; it plays a direct role in translocation across the membrane. A homomeric c-ring of between 10-14 subunits forms the central stalk rotor element with the F(1) delta and epsilon subunits. In Thiobacillus denitrificans (strain ATCC 25259 / T1), this protein is ATP synthase subunit c.